The primary structure comprises 305 residues: Acetyl-coenzyme A carboxylase carboxyl transferase subunit beta (305 aa).

Positions 27 to 296 constitute a CoA carboxyltransferase N-terminal domain; it reads LWVKCSACRE…PAAKADLAAR (270 aa). 4 residues coordinate Zn(2+): Cys-31, Cys-34, Cys-50, and Cys-53. The segment at 31 to 53 adopts a C4-type zinc-finger fold; that stretch reads CSACRELIYKKQLNDNLKVCPKC.

The protein belongs to the AccD/PCCB family. As to quaternary structure, acetyl-CoA carboxylase is a heterohexamer composed of biotin carboxyl carrier protein (AccB), biotin carboxylase (AccC) and two subunits each of ACCase subunit alpha (AccA) and ACCase subunit beta (AccD). The cofactor is Zn(2+).

It localises to the cytoplasm. The enzyme catalyses N(6)-carboxybiotinyl-L-lysyl-[protein] + acetyl-CoA = N(6)-biotinyl-L-lysyl-[protein] + malonyl-CoA. It participates in lipid metabolism; malonyl-CoA biosynthesis; malonyl-CoA from acetyl-CoA: step 1/1. Component of the acetyl coenzyme A carboxylase (ACC) complex. Biotin carboxylase (BC) catalyzes the carboxylation of biotin on its carrier protein (BCCP) and then the CO(2) group is transferred by the transcarboxylase to acetyl-CoA to form malonyl-CoA. This chain is Acetyl-coenzyme A carboxylase carboxyl transferase subunit beta, found in Chloroflexus aggregans (strain MD-66 / DSM 9485).